The following is a 387-amino-acid chain: GDSL esterase/lipase At2g23540 (387 aa).

Residues 1–32 (MATRASTSSRVSPAFTFLVIFFLLSLTASVEA) form the signal peptide. The Nucleophile role is filled by serine 55. 2 N-linked (GlcNAc...) asparagine glycosylation sites follow: asparagine 139 and asparagine 159. Residues aspartate 352 and histidine 355 contribute to the active site. Asparagine 380 carries N-linked (GlcNAc...) asparagine glycosylation.

This sequence belongs to the 'GDSL' lipolytic enzyme family.

Its subcellular location is the secreted. In Arabidopsis thaliana (Mouse-ear cress), this protein is GDSL esterase/lipase At2g23540.